Here is a 104-residue protein sequence, read N- to C-terminus: Urease subunit beta (104 aa).

This sequence belongs to the urease beta subunit family. As to quaternary structure, heterotrimer of UreA (gamma), UreB (beta) and UreC (alpha) subunits. Three heterotrimers associate to form the active enzyme.

The protein localises to the cytoplasm. It catalyses the reaction urea + 2 H2O + H(+) = hydrogencarbonate + 2 NH4(+). The protein operates within nitrogen metabolism; urea degradation; CO(2) and NH(3) from urea (urease route): step 1/1. The chain is Urease subunit beta from Mycolicibacterium vanbaalenii (strain DSM 7251 / JCM 13017 / BCRC 16820 / KCTC 9966 / NRRL B-24157 / PYR-1) (Mycobacterium vanbaalenii).